Consider the following 60-residue polypeptide: Conotoxin Cl1.1 (60 aa).

The signal sequence occupies residues methionine 1–alanine 19. Positions valine 20 to glycine 48 are excised as a propeptide.

The protein belongs to the conotoxin T superfamily. Post-translationally, contains 2 disulfide bonds. As to expression, expressed by the venom duct.

The protein resides in the secreted. This is Conotoxin Cl1.1 from Californiconus californicus (California cone).